Here is a 248-residue protein sequence, read N- to C-terminus: MKEPSKNRIVAMIPARYKASRFPGKLMKDLNGKTVIARTYEAAVNTELFDEVYVVTDSNKIFDEIVNEGGQVIRSKKEHECGSDRIAEAVENMDVDIVVNVQGDEPFIDKNSLAKLLKVFEQEGAEEIDLTSLKTPLKDSDDITNPNNVKVITGKDDFALYFSRFPIPYRRDTSANVTYYKHIGIYAFRKSALMDFYRLPMLHLEAAEKIECIRYLEYGKKIKMVETSVKSVGIDTPEDLEKARKLLS.

This sequence belongs to the KdsB family.

Its subcellular location is the cytoplasm. It catalyses the reaction 3-deoxy-alpha-D-manno-oct-2-ulosonate + CTP = CMP-3-deoxy-beta-D-manno-octulosonate + diphosphate. Its pathway is nucleotide-sugar biosynthesis; CMP-3-deoxy-D-manno-octulosonate biosynthesis; CMP-3-deoxy-D-manno-octulosonate from 3-deoxy-D-manno-octulosonate and CTP: step 1/1. The protein operates within bacterial outer membrane biogenesis; lipopolysaccharide biosynthesis. In terms of biological role, activates KDO (a required 8-carbon sugar) for incorporation into bacterial lipopolysaccharide in Gram-negative bacteria. This chain is 3-deoxy-manno-octulosonate cytidylyltransferase, found in Christiangramia forsetii (strain DSM 17595 / CGMCC 1.15422 / KT0803) (Gramella forsetii).